A 436-amino-acid chain; its full sequence is Enolase (436 aa).

Residue Q167 participates in (2R)-2-phosphoglycerate binding. Residue E209 is the Proton donor of the active site. D246, E291, and D318 together coordinate Mg(2+). Positions 343, 372, 373, and 394 each coordinate (2R)-2-phosphoglycerate. The Proton acceptor role is filled by K343.

The protein belongs to the enolase family. Component of the RNA degradosome, a multiprotein complex involved in RNA processing and mRNA degradation. Mg(2+) is required as a cofactor.

The protein resides in the cytoplasm. The protein localises to the secreted. Its subcellular location is the cell surface. It catalyses the reaction (2R)-2-phosphoglycerate = phosphoenolpyruvate + H2O. It functions in the pathway carbohydrate degradation; glycolysis; pyruvate from D-glyceraldehyde 3-phosphate: step 4/5. Its function is as follows. Catalyzes the reversible conversion of 2-phosphoglycerate (2-PG) into phosphoenolpyruvate (PEP). It is essential for the degradation of carbohydrates via glycolysis. This is Enolase from Haemophilus influenzae (strain PittGG).